A 113-amino-acid chain; its full sequence is Ig kappa chain V-II region 7S34.1 (113 aa).

The tract at residues 1–23 (DIVMTQTAPSALVTPGESVSISC) is framework-1. An intrachain disulfide couples cysteine 23 to cysteine 93. The complementarity-determining-1 stretch occupies residues 24–39 (RSSKSLLHSNGNTYLY). Residues 40–54 (WFLQRPGQCPQLLIY) form a framework-2 region. Residues 55–61 (RMSNLAS) form a complementarity-determining-2 region. Residues 62 to 93 (GVPDRFSGSGSGTAFTLRISRVEAEDVGVYYC) form a framework-3 region. The complementarity-determining-3 stretch occupies residues 94–102 (MQQREYPYT). The framework-4 stretch occupies residues 103–112 (FGGGTKLEIK).

The chain is Ig kappa chain V-II region 7S34.1 from Mus musculus (Mouse).